Reading from the N-terminus, the 318-residue chain is NADH-ubiquinone oxidoreductase chain 1 (318 aa).

8 helical membrane passes run 2 to 22 (FTIN…FLTL), 70 to 90 (MFII…IPLP), 100 to 120 (LGVL…LWSG), 146 to 166 (LAII…STLI), 171 to 191 (HLWL…STLA), 222 to 242 (LFFM…TILF), 254 to 276 (LYTI…IRAS), and 294 to 314 (LPLT…TSSI).

The protein belongs to the complex I subunit 1 family. In terms of assembly, core subunit of respiratory chain NADH dehydrogenase (Complex I) which is composed of 45 different subunits.

The protein resides in the mitochondrion inner membrane. It catalyses the reaction a ubiquinone + NADH + 5 H(+)(in) = a ubiquinol + NAD(+) + 4 H(+)(out). Core subunit of the mitochondrial membrane respiratory chain NADH dehydrogenase (Complex I) which catalyzes electron transfer from NADH through the respiratory chain, using ubiquinone as an electron acceptor. Essential for the catalytic activity and assembly of complex I. This is NADH-ubiquinone oxidoreductase chain 1 (MT-ND1) from Ceratotherium simum (White rhinoceros).